We begin with the raw amino-acid sequence, 346 residues long: Sensor protein kinase GraS (346 aa).

2 helical membrane-spanning segments follow: residues 18–38 (IFWILFLNILMLGISLIDYDF) and 43–63 (LFYIVSLNLSLTLIFLILTFF). Positions 126-332 (EFVHDIKTPV…TVKLIFPLQN (207 aa)) constitute a Histidine kinase domain.

In terms of assembly, interacts with GraX.

The protein resides in the cell membrane. It carries out the reaction ATP + protein L-histidine = ADP + protein N-phospho-L-histidine.. Functionally, member of the two-component regulatory system GraR/GraS involved in resistance against cationic antimicrobial peptides (CAMPs). Functions as a sensor protein kinase which phosphorylates GraR through the auxiliary protein GraX. In turn, GraR up-regulates many genes such as adhesins, exoproteins, transporters, toxins, and proteins involved in cell wall synthesis. Down-regulates the expression of many genes involved in RNA and amino acid synthesis or glycolysis. The protein is Sensor protein kinase GraS (graS) of Staphylococcus aureus (strain MRSA252).